The sequence spans 215 residues: Large ribosomal subunit protein uL4 (215 aa).

The tract at residues 46–76 (TAKSKNRAEVSGGGRKPWAQKGGGRARAGSI) is disordered. Gly residues predominate over residues 56–71 (SGGGRKPWAQKGGGRA).

The protein belongs to the universal ribosomal protein uL4 family. Part of the 50S ribosomal subunit.

One of the primary rRNA binding proteins, this protein initially binds near the 5'-end of the 23S rRNA. It is important during the early stages of 50S assembly. It makes multiple contacts with different domains of the 23S rRNA in the assembled 50S subunit and ribosome. Functionally, forms part of the polypeptide exit tunnel. The chain is Large ribosomal subunit protein uL4 from Helicobacter acinonychis (strain Sheeba).